Reading from the N-terminus, the 383-residue chain is 3-dehydroquinate synthase (383 aa).

Residues 81 to 86, 115 to 119, 139 to 140, Lys152, and Lys161 each bind NAD(+); these read EGEVSK, GVVGD, and TS. Residues Glu194, His256, and His274 each contribute to the Zn(2+) site.

This sequence belongs to the sugar phosphate cyclases superfamily. Dehydroquinate synthase family. Co(2+) serves as cofactor. Zn(2+) is required as a cofactor. The cofactor is NAD(+).

The protein localises to the cytoplasm. The enzyme catalyses 7-phospho-2-dehydro-3-deoxy-D-arabino-heptonate = 3-dehydroquinate + phosphate. It participates in metabolic intermediate biosynthesis; chorismate biosynthesis; chorismate from D-erythrose 4-phosphate and phosphoenolpyruvate: step 2/7. In terms of biological role, catalyzes the conversion of 3-deoxy-D-arabino-heptulosonate 7-phosphate (DAHP) to dehydroquinate (DHQ). The sequence is that of 3-dehydroquinate synthase from Nitrobacter winogradskyi (strain ATCC 25391 / DSM 10237 / CIP 104748 / NCIMB 11846 / Nb-255).